Consider the following 190-residue polypeptide: Xanthine phosphoribosyltransferase (190 aa).

Xanthine contacts are provided by leucine 20 and asparagine 27. 128 to 132 (ANGKA) is a binding site for 5-phospho-alpha-D-ribose 1-diphosphate. Position 156 (lysine 156) interacts with xanthine.

The protein belongs to the purine/pyrimidine phosphoribosyltransferase family. Xpt subfamily. Homodimer.

It localises to the cytoplasm. It catalyses the reaction XMP + diphosphate = xanthine + 5-phospho-alpha-D-ribose 1-diphosphate. It participates in purine metabolism; XMP biosynthesis via salvage pathway; XMP from xanthine: step 1/1. In terms of biological role, converts the preformed base xanthine, a product of nucleic acid breakdown, to xanthosine 5'-monophosphate (XMP), so it can be reused for RNA or DNA synthesis. This chain is Xanthine phosphoribosyltransferase, found in Pseudomonas entomophila (strain L48).